The following is a 134-amino-acid chain: Phosphoribosyl-AMP cyclohydrolase (134 aa).

Asp80 is a binding site for Mg(2+). Cys81 is a Zn(2+) binding site. The Mg(2+) site is built by Asp82 and Asp84. Zn(2+) is bound by residues Cys98 and Cys105.

It belongs to the PRA-CH family. Homodimer. Mg(2+) is required as a cofactor. The cofactor is Zn(2+).

Its subcellular location is the cytoplasm. The enzyme catalyses 1-(5-phospho-beta-D-ribosyl)-5'-AMP + H2O = 1-(5-phospho-beta-D-ribosyl)-5-[(5-phospho-beta-D-ribosylamino)methylideneamino]imidazole-4-carboxamide. It participates in amino-acid biosynthesis; L-histidine biosynthesis; L-histidine from 5-phospho-alpha-D-ribose 1-diphosphate: step 3/9. Functionally, catalyzes the hydrolysis of the adenine ring of phosphoribosyl-AMP. In Bordetella bronchiseptica (strain ATCC BAA-588 / NCTC 13252 / RB50) (Alcaligenes bronchisepticus), this protein is Phosphoribosyl-AMP cyclohydrolase.